The chain runs to 256 residues: uncharacterized protein (256 aa).

The segment covering 201–214 has biased composition (basic and acidic residues); the sequence is ACKEGVDSSCKEEG. A disordered region spans residues 201–231; that stretch reads ACKEGVDSSCKEEGGGCEEEGSGSEEDSDDS. The span at 215-231 shows a compositional bias: acidic residues; sequence GGCEEEGSGSEEDSDDS.

The protein resides in the mitochondrion. This is an uncharacterized protein from Zea mays (Maize).